We begin with the raw amino-acid sequence, 301 residues long: GTPase Era (301 aa).

The Era-type G domain occupies 7–175 (YCGFVAIVGR…AAIVRKHLPE (169 aa)). The G1 stretch occupies residues 15-22 (GRPNVGKS). A GTP-binding site is contributed by 15-22 (GRPNVGKS). The segment at 41–45 (QTTRH) is G2. Positions 62-65 (DTPG) are G3. GTP contacts are provided by residues 62–66 (DTPGL) and 124–127 (NKVD). The G4 stretch occupies residues 124-127 (NKVD). The tract at residues 154–156 (ISA) is G5. Residues 206-283 (LGAELPYSVT…HLELWVKVKS (78 aa)) enclose the KH type-2 domain.

This sequence belongs to the TRAFAC class TrmE-Era-EngA-EngB-Septin-like GTPase superfamily. Era GTPase family. In terms of assembly, monomer.

The protein localises to the cytoplasm. The protein resides in the cell inner membrane. Its function is as follows. An essential GTPase that binds both GDP and GTP, with rapid nucleotide exchange. Plays a role in 16S rRNA processing and 30S ribosomal subunit biogenesis and possibly also in cell cycle regulation and energy metabolism. The chain is GTPase Era from Klebsiella pneumoniae subsp. pneumoniae (strain ATCC 700721 / MGH 78578).